We begin with the raw amino-acid sequence, 750 residues long: Photosystem I P700 chlorophyll a apoprotein A1 (750 aa).

A run of 8 helical transmembrane segments spans residues 70–93 (VFSA…FHGA), 156–179 (LYCT…FHYH), 195–219 (LNHH…HVSL), 291–309 (TAHH…GHMY), 346–369 (WHAQ…HHMY), 385–411 (LSLF…IFMV), 433–455 (AIIS…LYIH), and 531–549 (FLVH…LILL). [4Fe-4S] cluster contacts are provided by Cys-573 and Cys-582. 2 helical membrane-spanning segments follow: residues 589–610 (HVFL…HFSW) and 664–686 (LSAY…MFLF). His-675 contacts chlorophyll a'. The chlorophyll a site is built by Met-683 and Tyr-691. Trp-692 is a binding site for phylloquinone. The chain crosses the membrane as a helical span at residues 724–744 (AVGVAHYLLGGIATTWAFFLA).

It belongs to the PsaA/PsaB family. In terms of assembly, the PsaA/B heterodimer binds the P700 chlorophyll special pair and subsequent electron acceptors. PSI consists of a core antenna complex that captures photons, and an electron transfer chain that converts photonic excitation into a charge separation. The eukaryotic PSI reaction center is composed of at least 11 subunits. Requires P700 is a chlorophyll a/chlorophyll a' dimer, A0 is one or more chlorophyll a, A1 is one or both phylloquinones and FX is a shared 4Fe-4S iron-sulfur center. as cofactor.

The protein resides in the plastid. It localises to the chloroplast thylakoid membrane. It carries out the reaction reduced [plastocyanin] + hnu + oxidized [2Fe-2S]-[ferredoxin] = oxidized [plastocyanin] + reduced [2Fe-2S]-[ferredoxin]. In terms of biological role, psaA and PsaB bind P700, the primary electron donor of photosystem I (PSI), as well as the electron acceptors A0, A1 and FX. PSI is a plastocyanin-ferredoxin oxidoreductase, converting photonic excitation into a charge separation, which transfers an electron from the donor P700 chlorophyll pair to the spectroscopically characterized acceptors A0, A1, FX, FA and FB in turn. Oxidized P700 is reduced on the lumenal side of the thylakoid membrane by plastocyanin. The chain is Photosystem I P700 chlorophyll a apoprotein A1 from Angiopteris evecta (Mule's foot fern).